We begin with the raw amino-acid sequence, 483 residues long: Ribulose bisphosphate carboxylase large chain (483 aa).

The propeptide occupies methionine 1 to serine 2. Positions 123 and 173 each coordinate substrate. Lysine 175 functions as the Proton acceptor in the catalytic mechanism. A substrate-binding site is contributed by lysine 177. Residues lysine 201, aspartate 203, and glutamate 204 each contribute to the Mg(2+) site. Lysine 201 carries the N6-carboxylysine modification. Serine 208 carries the phosphoserine modification. Histidine 294 (proton acceptor) is an active-site residue. Substrate is bound by residues arginine 295 and histidine 327. Position 330 is a phosphothreonine (threonine 330). Serine 379 is a binding site for substrate.

The protein belongs to the RuBisCO large chain family. Type I subfamily. In terms of assembly, heterohexadecamer of 8 large chains and 8 small chains; disulfide-linked. The disulfide link is formed within the large subunit homodimers. The cofactor is Mg(2+). In terms of processing, the disulfide bond which can form in the large chain dimeric partners within the hexadecamer appears to be associated with oxidative stress and protein turnover.

It localises to the plastid. The protein localises to the chloroplast. The enzyme catalyses 2 (2R)-3-phosphoglycerate + 2 H(+) = D-ribulose 1,5-bisphosphate + CO2 + H2O. It carries out the reaction D-ribulose 1,5-bisphosphate + O2 = 2-phosphoglycolate + (2R)-3-phosphoglycerate + 2 H(+). Its function is as follows. RuBisCO catalyzes two reactions: the carboxylation of D-ribulose 1,5-bisphosphate, the primary event in carbon dioxide fixation, as well as the oxidative fragmentation of the pentose substrate in the photorespiration process. Both reactions occur simultaneously and in competition at the same active site. This Aethionema cordifolium (Lebanon stonecress) protein is Ribulose bisphosphate carboxylase large chain.